A 340-amino-acid polypeptide reads, in one-letter code: GTPase Obg (340 aa).

The region spanning 1–159 is the Obg domain; the sequence is MDFIDEVKLY…KYVVLKLKVL (159 aa). Residues 160 to 329 form the OBG-type G domain; sequence SDVGIIGMPN…LNEKLKKGSS (170 aa). Residues 166–173, 191–195, 212–215, 279–282, and 310–312 contribute to the GTP site; these read GMPNAGKS, FTTIK, DIPG, NKCD, and GED. Mg(2+) contacts are provided by S173 and T193.

The protein belongs to the TRAFAC class OBG-HflX-like GTPase superfamily. OBG GTPase family. In terms of assembly, monomer. Mg(2+) is required as a cofactor.

It is found in the cytoplasm. An essential GTPase which binds GTP, GDP and possibly (p)ppGpp with moderate affinity, with high nucleotide exchange rates and a fairly low GTP hydrolysis rate. Plays a role in control of the cell cycle, stress response, ribosome biogenesis and in those bacteria that undergo differentiation, in morphogenesis control. The sequence is that of GTPase Obg from Wolbachia sp. subsp. Brugia malayi (strain TRS).